The sequence spans 164 residues: UPF0225 protein Shewmr7_1921 (164 aa).

This sequence belongs to the UPF0225 family.

The sequence is that of UPF0225 protein Shewmr7_1921 from Shewanella sp. (strain MR-7).